Consider the following 630-residue polypeptide: Chaperone protein HtpG (630 aa).

Residues 1 to 343 form an a; substrate-binding region; sequence MAKHQFQTEA…SKDLPLNVSR (343 aa). The segment at 344-554 is b; the sequence is EILQSNAVMA…KEDPAFMMAQ (211 aa). The tract at residues 555–630 is c; that stretch reads IMKQMGQSGD…RLNRVIAKAI (76 aa).

Belongs to the heat shock protein 90 family. Homodimer.

Its subcellular location is the cytoplasm. Its function is as follows. Molecular chaperone. Has ATPase activity. The polypeptide is Chaperone protein HtpG (Sulfurimonas denitrificans (strain ATCC 33889 / DSM 1251) (Thiomicrospira denitrificans (strain ATCC 33889 / DSM 1251))).